The sequence spans 282 residues: Bifunctional protein FolD (282 aa).

Residues 164–166 (GRS) and S189 each bind NADP(+).

The protein belongs to the tetrahydrofolate dehydrogenase/cyclohydrolase family. Homodimer.

It carries out the reaction (6R)-5,10-methylene-5,6,7,8-tetrahydrofolate + NADP(+) = (6R)-5,10-methenyltetrahydrofolate + NADPH. The catalysed reaction is (6R)-5,10-methenyltetrahydrofolate + H2O = (6R)-10-formyltetrahydrofolate + H(+). Its pathway is one-carbon metabolism; tetrahydrofolate interconversion. Catalyzes the oxidation of 5,10-methylenetetrahydrofolate to 5,10-methenyltetrahydrofolate and then the hydrolysis of 5,10-methenyltetrahydrofolate to 10-formyltetrahydrofolate. This chain is Bifunctional protein FolD, found in Anaeromyxobacter dehalogenans (strain 2CP-C).